The primary structure comprises 345 residues: Phosphoribosylformylglycinamidine cyclo-ligase (345 aa).

The protein belongs to the AIR synthase family.

It localises to the cytoplasm. The catalysed reaction is 2-formamido-N(1)-(5-O-phospho-beta-D-ribosyl)acetamidine + ATP = 5-amino-1-(5-phospho-beta-D-ribosyl)imidazole + ADP + phosphate + H(+). Its pathway is purine metabolism; IMP biosynthesis via de novo pathway; 5-amino-1-(5-phospho-D-ribosyl)imidazole from N(2)-formyl-N(1)-(5-phospho-D-ribosyl)glycinamide: step 2/2. This chain is Phosphoribosylformylglycinamidine cyclo-ligase, found in Anaeromyxobacter dehalogenans (strain 2CP-C).